Consider the following 108-residue polypeptide: uncharacterized protein (108 aa).

Residues 1 to 15 are compositionally biased toward polar residues; the sequence is MSDSNSRLVYSTQTG. The tract at residues 1 to 29 is disordered; sequence MSDSNSRLVYSTQTGRIEEPKTAPVRPKG. A compositionally biased stretch (basic and acidic residues) spans 16–29; it reads RIEEPKTAPVRPKG.

It belongs to the SUI1 family.

This is an uncharacterized protein from Salmonella typhi.